Here is a 340-residue protein sequence, read N- to C-terminus: Chitinase 2 (340 aa).

Positions 1 to 32 (MSTPRAAASLAKKAALVALAVLAAALATAARA) are cleaved as a signal peptide. The 41-residue stretch at 33–73 (EQCGAQAGGARCPNCLCCSRWGWCGTTSDFCGDGCQSQCSG) folds into the Chitin-binding type-1 domain. Cystine bridges form between Cys-35–Cys-50, Cys-44–Cys-56, Cys-47–Cys-74, Cys-49–Cys-63, Cys-67–Cys-71, Cys-110–Cys-172, Cys-184–Cys-192, and Cys-291–Cys-323. The active-site Proton donor is the Glu-154.

The protein belongs to the glycosyl hydrolase 19 family. Chitinase class I subfamily. In terms of tissue distribution, expressed in roots, sheaths and meristems.

The enzyme catalyses Random endo-hydrolysis of N-acetyl-beta-D-glucosaminide (1-&gt;4)-beta-linkages in chitin and chitodextrins.. Hydrolyzes chitin and plays a role in defense against fungal pathogens containing chitin. Its overexpression confers enhanced resistance to sheath blight pathogen (R.solani). The sequence is that of Chitinase 2 (Cht2) from Oryza sativa subsp. japonica (Rice).